Consider the following 157-residue polypeptide: Class-10 pathogenesis-related protein 1 (157 aa).

It belongs to the BetVI family. As to expression, high levels in roots and not detectable in hypocotyls, cotyledons, stems, leaves and flower buds of untreated plants. After induction, high levels are present in the vascular bundles of leaves.

The protein localises to the cytoplasm. This chain is Class-10 pathogenesis-related protein 1 (MSPR10-1), found in Medicago sativa (Alfalfa).